Here is a 342-residue protein sequence, read N- to C-terminus: S-adenosylmethionine:tRNA ribosyltransferase-isomerase (342 aa).

This sequence belongs to the QueA family. Monomer.

Its subcellular location is the cytoplasm. The catalysed reaction is 7-aminomethyl-7-carbaguanosine(34) in tRNA + S-adenosyl-L-methionine = epoxyqueuosine(34) in tRNA + adenine + L-methionine + 2 H(+). The protein operates within tRNA modification; tRNA-queuosine biosynthesis. Transfers and isomerizes the ribose moiety from AdoMet to the 7-aminomethyl group of 7-deazaguanine (preQ1-tRNA) to give epoxyqueuosine (oQ-tRNA). This Listeria monocytogenes serotype 4a (strain HCC23) protein is S-adenosylmethionine:tRNA ribosyltransferase-isomerase.